A 47-amino-acid chain; its full sequence is Delta-actitoxin-Ael1b (47 aa).

Cystine bridges form between cysteine 4–cysteine 44, cysteine 6–cysteine 34, and cysteine 27–cysteine 45.

It belongs to the sea anemone sodium channel inhibitory toxin family. Type I subfamily.

The protein localises to the secreted. It is found in the nematocyst. Its function is as follows. Produces a positive inotropic effect in mammalian heart muscle. Modifies current passing through the fast sodium channel (Nav) in neuroblastoma cells, leading to delayed and incomplete inactivation. Paralyzes the shore crab (C.maenas) by tetanic contractions after intramuscular injection. The protein is Delta-actitoxin-Ael1b of Anthopleura elegantissima (Green aggregating anemone).